The chain runs to 370 residues: Peptidyl-prolyl cis-trans isomerase D (370 aa).

Ser5 is subject to Phosphoserine. The region spanning 19 to 183 (FFDVDIGGER…KLCVIAECGE (165 aa)) is the PPIase cyclophilin-type domain. The residue at position 171 (Lys171) is an N6-acetyllysine. The segment at 185-215 (KEGDDGGIFPKDGSGDSHPDFPEDADIDLKD) is chaperone activity. Ser198 carries the post-translational modification Phosphoserine. Residues 214–370 (KDVDKILLIT…EKAVYAKMFA (157 aa)) form an interaction with HSP90AB1 region. TPR repeat units lie at residues 223–256 (TEDL…VDSS), 273–306 (LSCV…DPSN), and 307–340 (TKAL…APED).

It belongs to the cyclophilin-type PPIase family. PPIase D subfamily. Identified in ESR1 or NR3C1/GCR steroid receptor-chaperone complexes. Found in HSP90 chaperone complexes with kinase clients LCK or EIF2AK1. Two monomers associate with one HSP90 homodimer. Interacts with HSP90AA1. Interacts with HSP90AB1; PPID and FKBP4 compete for binding to HSP90AB1 and the interaction is mutually exclusive with the PPID:HSPA8 interaction. Interacts with HSPA8; PPID and STIP1 but not FKBP4 compete for binding to HSPA8 and the interaction is mutually exclusive with the PPID:HSP90AB1 interaction. Interacts with S100A1 and S100A2; the interactions dissociate the PPID:HSP90AA1 interaction. Interacts with S100A6. Interacts with MYB, ILF2, XRCC6, RACK1 and RPS3. Interacts with cytoplasmic dynein 1 intermediate chain (DYNC1I1 or DYNC1I2). In terms of tissue distribution, widely expressed.

It localises to the cytoplasm. It is found in the nucleus. The protein resides in the nucleolus. The protein localises to the nucleoplasm. The enzyme catalyses [protein]-peptidylproline (omega=180) = [protein]-peptidylproline (omega=0). Less sensitive to inhibition by cyclosporin A than is CYP-18. Functionally, PPIase that catalyzes the cis-trans isomerization of proline imidic peptide bonds in oligopeptides and may therefore assist protein folding. Proposed to act as a co-chaperone in HSP90 complexes such as in unligated steroid receptors heterocomplexes. Different co-chaperones seem to compete for association with HSP90 thus establishing distinct HSP90-co-chaperone-receptor complexes with the potential to exert tissue-specific receptor activity control. May have a preference for estrogen receptor complexes and is not found in glucocorticoid receptor complexes. May be involved in cytoplasmic dynein-dependent movement of the receptor from the cytoplasm to the nucleus. May regulate MYB by inhibiting its DNA-binding activity. Involved in regulation of AHR signaling by promoting the formation of the AHR:ARNT dimer; the function is independent of HSP90 but requires the chaperone activity. Involved in regulation of UV radiation-induced apoptosis. Promotes cell viability in anaplastic lymphoma kinase-positive anaplastic large-cell lymphoma (ALK+ ALCL) cell lines. (Microbial infection) May be involved in hepatitis C virus (HCV) replication and release. This is Peptidyl-prolyl cis-trans isomerase D from Homo sapiens (Human).